The chain runs to 434 residues: Nicotinate phosphoribosyltransferase (434 aa).

Position 242 is a phosphohistidine; by autocatalysis (His242).

It belongs to the NAPRTase family. Transiently phosphorylated on a His residue during the reaction cycle. Phosphorylation strongly increases the affinity for substrates and increases the rate of nicotinate D-ribonucleotide production. Dephosphorylation regenerates the low-affinity form of the enzyme, leading to product release.

It carries out the reaction nicotinate + 5-phospho-alpha-D-ribose 1-diphosphate + ATP + H2O = nicotinate beta-D-ribonucleotide + ADP + phosphate + diphosphate. It functions in the pathway cofactor biosynthesis; NAD(+) biosynthesis; nicotinate D-ribonucleotide from nicotinate: step 1/1. In terms of biological role, catalyzes the synthesis of beta-nicotinate D-ribonucleotide from nicotinate and 5-phospho-D-ribose 1-phosphate at the expense of ATP. The sequence is that of Nicotinate phosphoribosyltransferase from Brucella melitensis biotype 1 (strain ATCC 23456 / CCUG 17765 / NCTC 10094 / 16M).